A 78-amino-acid chain; its full sequence is Large ribosomal subunit protein bL31 (78 aa).

Zn(2+) contacts are provided by Cys-16, Cys-18, Cys-38, and Cys-41.

This sequence belongs to the bacterial ribosomal protein bL31 family. Type A subfamily. As to quaternary structure, part of the 50S ribosomal subunit. It depends on Zn(2+) as a cofactor.

Binds the 23S rRNA. The protein is Large ribosomal subunit protein bL31 of Parafrankia sp. (strain EAN1pec).